The primary structure comprises 387 residues: DNA double-strand break repair protein Mre11 (387 aa).

Mn(2+)-binding residues include Asp11, His13, Asp52, and Asp87. His88 (proton donor) is an active-site residue. 3 residues coordinate Mn(2+): His159, His190, and His192.

The protein belongs to the MRE11/RAD32 family. Homodimer. Forms a heterotetramer composed of two Mre11 subunits and two Rad50 subunits. Interacts with HerA. It depends on Mn(2+) as a cofactor.

With respect to regulation, nuclease activity is regulated by Rad50. Part of the Rad50/Mre11 complex, which is involved in the early steps of DNA double-strand break (DSB) repair. The complex may facilitate opening of the processed DNA ends to aid in the recruitment of HerA and NurA. Mre11 binds to DSB ends and has both double-stranded 3'-5' exonuclease activity and single-stranded endonuclease activity. The sequence is that of DNA double-strand break repair protein Mre11 from Sulfurisphaera tokodaii (strain DSM 16993 / JCM 10545 / NBRC 100140 / 7) (Sulfolobus tokodaii).